A 251-amino-acid chain; its full sequence is MRKSARGQVCTEAGAGASGDWQDMSSAWGKRAWQDLNSAWGKRGWNDMSSAWGKRAWQDLNSAWGKRGWQDLNSAWGKRAWRDMSQSPWGKRGWNDMSSAWGKRGWNDMSSAWGKRGWNDMSSAWGKRGWNDMSSAWGKRGPEKWANFHGSWGKRAAEPDYEEIDAAIEQLIPIQQLSDNERMEVPEKKAWSALHGAWGKRPVKQAQYNSGSYYWKREPAWTNLRGMWGKRSAPDADAVDDDHESSARDEA.

A disordered region spans residues 1–22 (MRKSARGQVCTEAGAGASGDWQ). Positions 1–77 (MRKSARGQVC…GWQDLNSAWG (77 aa)) are excised as a propeptide. The residue at position 89 (Trp-89) is a Tryptophan amide. The propeptide occupies 93–138 (GWNDMSSAWGKRGWNDMSSAWGKRGWNDMSSAWGKRGWNDMSSAWG). Trp-152 is modified (tryptophan amide). Positions 156–187 (AAEPDYEEIDAAIEQLIPIQQLSDNERMEVPE) are excised as a propeptide. Trp-198 and Trp-228 each carry tryptophan amide. Positions 227 to 251 (MWGKRSAPDADAVDDDHESSARDEA) are disordered.

In terms of tissue distribution, prothoracicostatic peptide 5: Expressed in antennal lobe (AL), corpora cardiaca (CC), corpora allata (CA) and gnathal ganglion (GNG) (at protein level). Expression in AL detected in all animals, in CC, CA and GNG in most (at protein level). Prothoracicostatic peptide 6: Expressed in antennal lobe (AL), corpora cardiaca (CC), corpora allata (CA) and gnathal ganglion (GNG) (at protein level). Expression in AL detected in all animals, expression in GNG in most animals, in CA and CC detected in some animals (at protein level). Prothoracicostatic peptide 7: Expressed in antennal lobe (AL), corpora cardiaca (CC), corpora allata (CA) and gnathal ganglion (GNG) (at protein level). Expression in AL, CA and CC detected in most animals, expression in GNG in some animals (at protein level). Prothoracicostatic peptide precursor-related peptide 2: Expressed in antennal lobe (AL), corpora cardiaca (CC) and corpora allata (CA) with expression detected in few animals (at protein level). Not expressed in gnathal ganglion (GNG) (at protein level). Prothoracicostatic peptide 8: Expressed in antennal lobe (AL), corpora cardiaca (CC), corpora allata (CA) and gnathal ganglion (GNG) (at protein level). Expression in AL detected in all animals, expression in GNG in most animals, in CA and CC detected in some animals (at protein level). Prothoracicostatic peptide precursor-related peptide 3: Expressed in antennal lobe (AL) in few animals (at protein level). Not expressed in corpora cardiaca (CC), corpora allata (CA) and gnathal ganglion (GNG) (at protein level).

The protein resides in the secreted. This is Prothoracicostatic peptides from Agrotis ipsilon (Black cutworm moth).